Consider the following 466-residue polypeptide: ATP synthase subunit beta (466 aa).

Residue 152–159 (GGAGVGKT) coordinates ATP.

Belongs to the ATPase alpha/beta chains family. As to quaternary structure, F-type ATPases have 2 components, CF(1) - the catalytic core - and CF(0) - the membrane proton channel. CF(1) has five subunits: alpha(3), beta(3), gamma(1), delta(1), epsilon(1). CF(0) has three main subunits: a(1), b(2) and c(9-12). The alpha and beta chains form an alternating ring which encloses part of the gamma chain. CF(1) is attached to CF(0) by a central stalk formed by the gamma and epsilon chains, while a peripheral stalk is formed by the delta and b chains.

It localises to the cell inner membrane. The catalysed reaction is ATP + H2O + 4 H(+)(in) = ADP + phosphate + 5 H(+)(out). Functionally, produces ATP from ADP in the presence of a proton gradient across the membrane. The catalytic sites are hosted primarily by the beta subunits. In Helicobacter acinonychis (strain Sheeba), this protein is ATP synthase subunit beta.